Reading from the N-terminus, the 392-residue chain is MKHIALLGSTGSIGTQTLDIVAEYPERFAVTGMTAHSNMELLAEQIRRFRPQVVAVGSEARRAALAALLAGFDGMPEMFVGEKGCCTVASQAPAEVVVTGIVGCAGLMPTLAAVDAGRDLALANKETLVAGGPVVMPRIRARGVKLLPVDSEHSAIFQCLQGVPEGALKRILLTASGGAFRDWPVEKLAEATTADALKHPNWVMGAKITVDSATLMNKGLEVIEAHWLFGLDYDRIEIVIHPQSIVHSLVELADTSVVAQLGWPDMRLPILYALSWPERLATPWKPLDLARVGTLTFKEPDHERYPNMRLAYQAGRAGGTYPTVLNAANEEAVAQFLQEKVRFLEMSRLLEATLEAHKSAGEPDLDDVCGADRWAREHVRWLVERSPARVLI.

The NADPH site is built by T10, G11, S12, I13, N38, and N124. K125 provides a ligand contact to 1-deoxy-D-xylulose 5-phosphate. E126 contributes to the NADPH binding site. D150 is a binding site for Mn(2+). Residues S151, E152, S176, and H199 each coordinate 1-deoxy-D-xylulose 5-phosphate. E152 is a binding site for Mn(2+). Position 205 (G205) interacts with NADPH. 1-deoxy-D-xylulose 5-phosphate is bound by residues S212, N217, K218, and E221. Residue E221 coordinates Mn(2+).

The protein belongs to the DXR family. Requires Mg(2+) as cofactor. The cofactor is Mn(2+).

The catalysed reaction is 2-C-methyl-D-erythritol 4-phosphate + NADP(+) = 1-deoxy-D-xylulose 5-phosphate + NADPH + H(+). Its pathway is isoprenoid biosynthesis; isopentenyl diphosphate biosynthesis via DXP pathway; isopentenyl diphosphate from 1-deoxy-D-xylulose 5-phosphate: step 1/6. Its function is as follows. Catalyzes the NADPH-dependent rearrangement and reduction of 1-deoxy-D-xylulose-5-phosphate (DXP) to 2-C-methyl-D-erythritol 4-phosphate (MEP). This chain is 1-deoxy-D-xylulose 5-phosphate reductoisomerase, found in Gloeobacter violaceus (strain ATCC 29082 / PCC 7421).